A 643-amino-acid polypeptide reads, in one-letter code: MALDSSVALSPRRRHGLLRDQVQLIKRKDSGRYEIVPIEDPLSFEKGFYAVIRACQLLAQKNDGLILVGLAGPSGAGKTIFTEKILNFMPSIAIINMDNYNDGTRVIDGNFDDPRLTDYDTLLDNIHGLRDGKPVQVPIYDFKSSSRIGYRTLEVPSSRIVILEGIYALSEKLRPLLDLRVSVTGGVHFDLVKRVLRDIQRAGQEPEEIIHQISETVYPMYKAFIEPDLKTAQIKILNKFNPFSGFQNPTYILKSSKAVTPEQMKAALSEDFKERTEETYDIYLLPPGEDPEACQSYLRMRNRDGKYNLMFEEWVTDRPFIISPRITFEVSVRLLGGLMALGYTIATILKRKSHIFDDDKVIVKTDWLEQLNRTYVQVQGKDRTFVKNVADQLGLEGSYVPHTYIEQIQLERLVNDVLALPDDLKTKLSLDDDTVSSPKEALSRASVDSRMKYLHGGVSKSYTNPRHKVLPNLTRLAVNNRMLDARAPASPATLPNQGFITQLSDQISTLNERMDEFTSRIEELNSKIPNRIAPSGSQHNLALPIENGNGSVLSFSASASQLVRESPLMEEVVLVARGQRQIMHQMDTLSNLLREYVGEKTRIERLDSSRTNSTTQNLESSTVPILLGLAIGCVGIFAYSRLK.

Residues 1–15 (MALDSSVALSPRRRH) constitute a mitochondrion transit peptide. The CYTH domain maps to 248 to 410 (NPTYILKSSK…PHTYIEQIQL (163 aa)). The helical transmembrane segment at 618–638 (LESSTVPILLGLAIGCVGIFA) threads the bilayer.

It depends on Mg(2+) as a cofactor. Ubiquitously expressed in all tissues, with strong expression detected in senescent leaves.

Its subcellular location is the mitochondrion outer membrane. It catalyses the reaction diphosphate + H2O = 2 phosphate + H(+). Its function is as follows. Exhibits pyrophosphatase activity with stronger affinity for pyrophosphate (PPi), moderate affinity for ATP and ADP, and weak affinity for tripolyphosphate (PPPi). No activity observed toward uridine substrate. Positively regulates natural and dark-induced leaf senescence. This Arabidopsis thaliana (Mouse-ear cress) protein is Inorganic pyrophosphatase TTM1.